We begin with the raw amino-acid sequence, 118 residues long: Putative pterin-4-alpha-carbinolamine dehydratase (118 aa).

Belongs to the pterin-4-alpha-carbinolamine dehydratase family.

The catalysed reaction is (4aS,6R)-4a-hydroxy-L-erythro-5,6,7,8-tetrahydrobiopterin = (6R)-L-erythro-6,7-dihydrobiopterin + H2O. This chain is Putative pterin-4-alpha-carbinolamine dehydratase (phhB), found in Xanthomonas axonopodis pv. citri (strain 306).